A 193-amino-acid polypeptide reads, in one-letter code: Phosphoheptose isomerase (193 aa).

The 157-residue stretch at 37-193 (LADSFKVGGK…QLIEKEMVKA (157 aa)) folds into the SIS domain. 52 to 54 (NGG) is a substrate binding site. Histidine 61 and glutamate 65 together coordinate Zn(2+). Residues glutamate 65, 93 to 94 (ND), 119 to 121 (STS), serine 124, and glutamine 172 contribute to the substrate site. Residues glutamine 172 and histidine 180 each contribute to the Zn(2+) site.

It belongs to the SIS family. GmhA subfamily. As to quaternary structure, homotetramer. It depends on Zn(2+) as a cofactor.

The protein localises to the cytoplasm. The enzyme catalyses 2 D-sedoheptulose 7-phosphate = D-glycero-alpha-D-manno-heptose 7-phosphate + D-glycero-beta-D-manno-heptose 7-phosphate. Its pathway is carbohydrate biosynthesis; D-glycero-D-manno-heptose 7-phosphate biosynthesis; D-glycero-alpha-D-manno-heptose 7-phosphate and D-glycero-beta-D-manno-heptose 7-phosphate from sedoheptulose 7-phosphate: step 1/1. It functions in the pathway bacterial outer membrane biogenesis; LPS core biosynthesis. Its function is as follows. Catalyzes the isomerization of sedoheptulose 7-phosphate in D-glycero-D-manno-heptose 7-phosphate. This is Phosphoheptose isomerase from Photorhabdus laumondii subsp. laumondii (strain DSM 15139 / CIP 105565 / TT01) (Photorhabdus luminescens subsp. laumondii).